A 311-amino-acid polypeptide reads, in one-letter code: tRNA-cytidine(32) 2-sulfurtransferase (311 aa).

A PP-loop motif motif is present at residues 47-52 (SGGKDS). The [4Fe-4S] cluster site is built by C122, C125, and C213.

The protein belongs to the TtcA family. As to quaternary structure, homodimer. Requires Mg(2+) as cofactor. [4Fe-4S] cluster serves as cofactor.

The protein localises to the cytoplasm. It carries out the reaction cytidine(32) in tRNA + S-sulfanyl-L-cysteinyl-[cysteine desulfurase] + AH2 + ATP = 2-thiocytidine(32) in tRNA + L-cysteinyl-[cysteine desulfurase] + A + AMP + diphosphate + H(+). Its pathway is tRNA modification. Functionally, catalyzes the ATP-dependent 2-thiolation of cytidine in position 32 of tRNA, to form 2-thiocytidine (s(2)C32). The sulfur atoms are provided by the cysteine/cysteine desulfurase (IscS) system. The protein is tRNA-cytidine(32) 2-sulfurtransferase of Enterobacter sp. (strain 638).